A 153-amino-acid polypeptide reads, in one-letter code: UPF0260 protein YcgN (153 aa).

Belongs to the UPF0260 family.

This is UPF0260 protein YcgN from Salmonella dublin (strain CT_02021853).